The sequence spans 233 residues: Ribose-5-phosphate isomerase A (233 aa).

Residues 28-31, 83-86, and 96-99 each bind substrate; these read SGST, DGAD, and KGGG. The Proton acceptor role is filled by glutamate 105. Lysine 123 contacts substrate.

The protein belongs to the ribose 5-phosphate isomerase family. As to quaternary structure, homodimer.

It carries out the reaction aldehydo-D-ribose 5-phosphate = D-ribulose 5-phosphate. It functions in the pathway carbohydrate degradation; pentose phosphate pathway; D-ribose 5-phosphate from D-ribulose 5-phosphate (non-oxidative stage): step 1/1. Catalyzes the reversible conversion of ribose-5-phosphate to ribulose 5-phosphate. The protein is Ribose-5-phosphate isomerase A of Maricaulis maris (strain MCS10) (Caulobacter maris).